The chain runs to 724 residues: RINT1-like protein (724 aa).

Residues arginine 163–phenylalanine 724 form the RINT1/TIP20 domain.

This sequence belongs to the RINT1 family.

Its function is as follows. During cytokinesis in male meiotic cells, required for completion of cleavage furrow ingression possibly in conjunction with Zw10. Required for maintenance of Golgi stack number and morphology. Essential for acroblast assembly. This chain is RINT1-like protein, found in Drosophila melanogaster (Fruit fly).